Reading from the N-terminus, the 637-residue chain is Threonine--tRNA ligase (637 aa).

Residues 1–61 (MIKVTLKDGK…DKDCNLEILT (61 aa)) form the TGS domain. The segment at 242-532 (DHRKIGKELD…LIEHYAGAFP (291 aa)) is catalytic. 3 residues coordinate Zn(2+): Cys333, His384, and His509.

The protein belongs to the class-II aminoacyl-tRNA synthetase family. As to quaternary structure, homodimer. Zn(2+) serves as cofactor.

The protein localises to the cytoplasm. The catalysed reaction is tRNA(Thr) + L-threonine + ATP = L-threonyl-tRNA(Thr) + AMP + diphosphate + H(+). Its function is as follows. Catalyzes the attachment of threonine to tRNA(Thr) in a two-step reaction: L-threonine is first activated by ATP to form Thr-AMP and then transferred to the acceptor end of tRNA(Thr). Also edits incorrectly charged L-seryl-tRNA(Thr). This is Threonine--tRNA ligase from Clostridium acetobutylicum (strain ATCC 824 / DSM 792 / JCM 1419 / IAM 19013 / LMG 5710 / NBRC 13948 / NRRL B-527 / VKM B-1787 / 2291 / W).